A 923-amino-acid polypeptide reads, in one-letter code: Lysosomal acid alpha-glucosidase (923 aa).

The signal sequence occupies residues 1-17; sequence MKHQVLLPLLVTTAIIA. Positions 18-36 are excised as a propeptide; that stretch reads GSVGVYTHSKPLLGQSQDQ. Asparagine 65, asparagine 405, and asparagine 440 each carry an N-linked (GlcNAc...) asparagine glycan. Residue aspartate 455 is the Nucleophile of the active site. Residue glutamate 458 is part of the active site. Aspartate 585 functions as the Proton donor in the catalytic mechanism. Asparagine 586, asparagine 621, asparagine 646, asparagine 848, asparagine 908, and asparagine 912 each carry an N-linked (GlcNAc...) asparagine glycan.

Belongs to the glycosyl hydrolase 31 family.

The protein resides in the lysosome. It is found in the secreted. It carries out the reaction Hydrolysis of terminal, non-reducing (1-&gt;4)-linked alpha-D-glucose residues with release of alpha-D-glucose.. Functionally, essential for the degradation of glycogen to glucose in lysosomes. Has both alpha-1,4 and alpha-1,6-glucosidase activity. The sequence is that of Lysosomal acid alpha-glucosidase from Tetrahymena pyriformis.